The chain runs to 762 residues: Ribosome-releasing factor 2, mitochondrial (762 aa).

The N-terminal 35 residues, 1–35 (MLLSLTFPVLRGCTGHLVNRSLQAPRWRVTWKRSY), are a transit peptide targeting the mitochondrion. The tr-type G domain occupies 54 to 341 (SKIRNIGIMA…AITAYLPAPN (288 aa)). Residues 63–70 (AHIDAGKT), 127–131 (DTPGH), and 181–184 (NKMD) contribute to the GTP site.

The protein belongs to the TRAFAC class translation factor GTPase superfamily. Classic translation factor GTPase family. EF-G/EF-2 subfamily.

The protein resides in the mitochondrion. The enzyme catalyses GTP + H2O = GDP + phosphate + H(+). In terms of biological role, mitochondrial GTPase that mediates the disassembly of ribosomes from messenger RNA at the termination of mitochondrial protein biosynthesis. Acts in collaboration with mrrf. GTP hydrolysis follows the ribosome disassembly and probably occurs on the ribosome large subunit. Not involved in the GTP-dependent ribosomal translocation step during translation elongation. The sequence is that of Ribosome-releasing factor 2, mitochondrial (gfm2) from Danio rerio (Zebrafish).